We begin with the raw amino-acid sequence, 395 residues long: Trans-2-enoyl-CoA reductase [NADH] (395 aa).

NAD(+)-binding positions include 47 to 52 (GASTGY), 73 to 74 (FE), 110 to 111 (DA), and 138 to 139 (LA). Y224 lines the substrate pocket. Y234 serves as the catalytic Proton donor. Residues K243 and 272 to 274 (VVT) contribute to the NAD(+) site.

It belongs to the TER reductase family. As to quaternary structure, monomer.

The enzyme catalyses a 2,3-saturated acyl-CoA + NAD(+) = a (2E)-enoyl-CoA + NADH + H(+). It functions in the pathway lipid metabolism; fatty acid biosynthesis. Involved in the fatty acid synthesis (FAS II). Catalyzes the reduction of a carbon-carbon double bond in an enoyl moiety that is covalently linked to a coenzyme A (CoA). The protein is Trans-2-enoyl-CoA reductase [NADH] of Ruminiclostridium cellulolyticum (strain ATCC 35319 / DSM 5812 / JCM 6584 / H10) (Clostridium cellulolyticum).